The primary structure comprises 546 residues: MAAKDVKFGRTAREKMLRGVDILADAVKVTLGPKGRNVVIEKSFGAPRITKDGVSVAKEVELEDKFENMGAQMLREVASKTNDTAGDGTTTATVLGQAIVQEGAKAVAAGMNPMDLKRGIDLAVNEVVAELLKKAKKINTSEEVAQVGTISANGEAEIGKMIAEAMQKVGNEGVITVEEAKTAETELEVVEGMQFDRGYLSPYFVTNPEKMVADLEDAYILLHEKKLSNLQALLPVLEAVVQTSKPLLIIAEDVEGEALATLVVNKLRGGLKIAAVKAPGFGDCRKAMLEDIAILTGGQVISEDLGIKLESVTLDMLGRAKKVSISKENTTIVDGAGQKAEIDARVGQIKQQIEETTSDYDREKLQERLAKLAGGVAVIRVGGATEVEVKEKKDRVDDALNATRAAVEEGIVAGGGTALLRASTKITAKGVNADQEAGINIVRRAIQAPARQITTNAGEEASVIVGKILENTSETFGYNTANGEYGDLISLGIVDPVKVVRTALQNAASVAGLLITTEAMIAELPKKDAAPAGMPGGMGGMGGMDF.

Residues 30–33, K51, 87–91, G415, and D495 contribute to the ATP site; these read TLGP and DGTTT.

The protein belongs to the chaperonin (HSP60) family. In terms of assembly, forms a cylinder of 14 subunits composed of two heptameric rings stacked back-to-back. Interacts with the co-chaperonin GroES.

It is found in the cytoplasm. The enzyme catalyses ATP + H2O + a folded polypeptide = ADP + phosphate + an unfolded polypeptide.. Functionally, together with its co-chaperonin GroES, plays an essential role in assisting protein folding. The GroEL-GroES system forms a nano-cage that allows encapsulation of the non-native substrate proteins and provides a physical environment optimized to promote and accelerate protein folding. In Brucella melitensis biotype 1 (strain ATCC 23456 / CCUG 17765 / NCTC 10094 / 16M), this protein is Chaperonin GroEL.